We begin with the raw amino-acid sequence, 483 residues long: Glutamyl-tRNA(Gln) amidotransferase subunit A (483 aa).

Catalysis depends on charge relay system residues K76 and S151. Catalysis depends on S175, which acts as the Acyl-ester intermediate.

The protein belongs to the amidase family. GatA subfamily. As to quaternary structure, heterotrimer of A, B and C subunits.

It catalyses the reaction L-glutamyl-tRNA(Gln) + L-glutamine + ATP + H2O = L-glutaminyl-tRNA(Gln) + L-glutamate + ADP + phosphate + H(+). In terms of biological role, allows the formation of correctly charged Gln-tRNA(Gln) through the transamidation of misacylated Glu-tRNA(Gln) in organisms which lack glutaminyl-tRNA synthetase. The reaction takes place in the presence of glutamine and ATP through an activated gamma-phospho-Glu-tRNA(Gln). The polypeptide is Glutamyl-tRNA(Gln) amidotransferase subunit A (Chromobacterium violaceum (strain ATCC 12472 / DSM 30191 / JCM 1249 / CCUG 213 / NBRC 12614 / NCIMB 9131 / NCTC 9757 / MK)).